The chain runs to 116 residues: Large ribosomal subunit protein bL17 (116 aa).

The protein belongs to the bacterial ribosomal protein bL17 family. As to quaternary structure, part of the 50S ribosomal subunit. Contacts protein L32.

The sequence is that of Large ribosomal subunit protein bL17 from Dictyoglomus thermophilum (strain ATCC 35947 / DSM 3960 / H-6-12).